A 243-amino-acid polypeptide reads, in one-letter code: Ice-binding protein K3-B1 (243 aa).

The N-terminal stretch at 1–20 (MFSASSLLAVIALAISSVSA) is a signal peptide.

The protein belongs to the ice-binding protein family.

In terms of biological role, binds to the surface of ice crystals. Has low thermal hysteresis (TH) activity, which is the ability to lower the freezing point of an aqueous solution below its melting point. The TH activity of this protein is approximately 0.3 degrees Celsius at 11 mM. This Typhula ishikariensis (Gray snow mold fungus) protein is Ice-binding protein K3-B1.